A 455-amino-acid polypeptide reads, in one-letter code: Glycylpeptide N-tetradecanoyltransferase (455 aa).

38–41 (HKFW) contacts tetradecanoyl-CoA. Positions 168–204 (INFLCVHKQLRSKRLTPVLIKEITRRVNKCDIWHALY) are myristoyl CoA-binding. Leucine 455 functions as the Proton acceptor; via carboxylate in the catalytic mechanism.

Belongs to the NMT family. As to quaternary structure, monomer. The N-terminus is blocked.

It localises to the cytoplasm. It catalyses the reaction N-terminal glycyl-[protein] + tetradecanoyl-CoA = N-tetradecanoylglycyl-[protein] + CoA + H(+). With respect to regulation, inhibited by diethylpyrocarbonate. Competitively inhibited by S-(2-oxo)pentadecyl-CoA, a non hydrolysable myristoyl-CoA analog, and by SC-58272, a peptidomimetic derived from the N-terminal sequence of a natural substrate. Adds a myristoyl group to the N-terminal glycine residue of certain cellular proteins. Substrate specificity requires an N-terminal glycine in the nascent polypeptide substrates. Uncharged amino acids are preferred at position 2 while neutral residues are favored at positions 3 and 4. Ser is present at position 5 in almost all known N-myristoyl proteins and Lys is commonly encountered at postion 6. This is Glycylpeptide N-tetradecanoyltransferase (NMT1) from Saccharomyces cerevisiae (strain ATCC 204508 / S288c) (Baker's yeast).